The chain runs to 48 residues: Sperm protamine R3 isoform 2 (48 aa).

Basic residues predominate over residues 1–29 (ARRRHSMKKKRKSVRRRKTRKNQRKRKNS). The interval 1–48 (ARRRHSMKKKRKSVRRRKTRKNQRKRKNSLGRSFKAHGFLKQPPRFRP) is disordered.

In terms of tissue distribution, testis.

The protein localises to the nucleus. It localises to the chromosome. Protamines substitute for histones in the chromatin of sperm during the haploid phase of spermatogenesis. They compact sperm DNA into a highly condensed, stable and inactive complex. This Hydrolagus colliei (Spotted ratfish) protein is Sperm protamine R3 isoform 2.